A 48-amino-acid chain; its full sequence is ATP synthase protein 8 (48 aa).

The helical transmembrane segment at 12 to 32 threads the bilayer; it reads LLTFGMLAISMLLYLVSTIIL.

Belongs to the ATPase protein 8 family. As to quaternary structure, F-type ATPases have 2 components, CF(1) - the catalytic core - and CF(0) - the membrane proton channel.

It is found in the mitochondrion membrane. In terms of biological role, mitochondrial membrane ATP synthase (F(1)F(0) ATP synthase or Complex V) produces ATP from ADP in the presence of a proton gradient across the membrane which is generated by electron transport complexes of the respiratory chain. F-type ATPases consist of two structural domains, F(1) - containing the extramembraneous catalytic core and F(0) - containing the membrane proton channel, linked together by a central stalk and a peripheral stalk. During catalysis, ATP synthesis in the catalytic domain of F(1) is coupled via a rotary mechanism of the central stalk subunits to proton translocation. Part of the complex F(0) domain. Minor subunit located with subunit a in the membrane. This Debaryomyces hansenii (strain ATCC 36239 / CBS 767 / BCRC 21394 / JCM 1990 / NBRC 0083 / IGC 2968) (Yeast) protein is ATP synthase protein 8 (ATP8).